The following is a 315-amino-acid chain: CRISPR-associated endonuclease Cas1 1 (315 aa).

Mn(2+) is bound by residues Glu-144, His-208, and Glu-223.

The protein belongs to the CRISPR-associated endonuclease Cas1 family. In terms of assembly, homodimer, forms a heterotetramer with a Cas2 homodimer. The cofactor is Mg(2+). Requires Mn(2+) as cofactor.

CRISPR (clustered regularly interspaced short palindromic repeat), is an adaptive immune system that provides protection against mobile genetic elements (viruses, transposable elements and conjugative plasmids). CRISPR clusters contain spacers, sequences complementary to antecedent mobile elements, and target invading nucleic acids. CRISPR clusters are transcribed and processed into CRISPR RNA (crRNA). Acts as a dsDNA endonuclease. Involved in the integration of spacer DNA into the CRISPR cassette. The chain is CRISPR-associated endonuclease Cas1 1 from Thermus thermophilus (strain ATCC 27634 / DSM 579 / HB8).